A 65-amino-acid chain; its full sequence is Large ribosomal subunit protein bL35 (65 aa).

Basic residues predominate over residues 1 to 15 (MPKLKTRKAAAKRFR). Positions 1 to 28 (MPKLKTRKAAAKRFRQTGTGKFTRRKAN) are disordered.

This sequence belongs to the bacterial ribosomal protein bL35 family.

This is Large ribosomal subunit protein bL35 from Cyanothece sp. (strain PCC 7425 / ATCC 29141).